A 219-amino-acid chain; its full sequence is Ras-related protein Rab-3B (219 aa).

Ala-2 is modified (N-acetylalanine). GTP is bound by residues Ser-31, Ser-32, Val-33, Gly-34, Lys-35, Thr-36, Ser-37, Pro-49, and Ser-53. Position 36 (Thr-36) interacts with Mg(2+). The short motif at 45 to 58 (DTFTPAFVSTVGID) is the Switch 1 element. Positions 54 and 77 each coordinate Mg(2+). The Switch 2 motif lies at 78–96 (TAGQERYRTITTAYYRGAM). Gly-80 serves as a coordination point for GTP. The residue at position 86 (Thr-86) is a Phosphothreonine; by LRRK2. GTP is bound by residues Asn-135, Lys-136, Asp-138, Ala-166, and Lys-167. Ser-188 and Ser-190 each carry phosphoserine. Residues Cys-217 and Cys-219 are each lipidated (S-geranylgeranyl cysteine). Cys-219 carries the post-translational modification Cysteine methyl ester.

This sequence belongs to the small GTPase superfamily. Rab family. As to quaternary structure, interacts with RIMS1, RIMS2, RPH3A and RPH3AL. The GTP-bound form interacts with GAS8/DRC4 (via coiled-coil domains). Interacts with GDI2, CHM and CHML; phosphorylation at Thr-86 disrupts these interactions. Interacts with MADD (via uDENN domain); the GTP-bound form is preferred for interaction. Requires Mg(2+) as cofactor. Phosphorylation of Thr-86 in the switch II region by LRRK2 prevents the association of RAB regulatory proteins, including CHM, CHML and RAB GDP dissociation inhibitor GDI2. In terms of tissue distribution, abundantly expressed in testis, lung and brain.

The protein localises to the cell membrane. It localises to the golgi apparatus. The catalysed reaction is GTP + H2O = GDP + phosphate + H(+). Regulated by guanine nucleotide exchange factors (GEFs) which promote the exchange of bound GDP for free GTP. Regulated by GTPase activating proteins (GAPs) which increase the GTP hydrolysis activity. Inhibited by GDP dissociation inhibitors (GDIs) which prevent Rab-GDP dissociation. Its function is as follows. The small GTPases Rab are key regulators of intracellular membrane trafficking, from the formation of transport vesicles to their fusion with membranes. Rabs cycle between an inactive GDP-bound form and an active GTP-bound form that is able to recruit to membranes different sets of downstream effectors directly responsible for vesicle formation, movement, tethering and fusion. This chain is Ras-related protein Rab-3B, found in Mus musculus (Mouse).